The primary structure comprises 148 residues: MEFLSGYFLWVKAFHVIAVISWMAALFYLPRLFVYHAENAHKKEFVGVVQIQEKKLYSFIASPAMGFTLITGILMLLIAPEMFKSGGWLHAKLALVVLLLIYHFYCKKCMRELEKDPTGKNARFYRVFNEIPTILMILIVILVVVKPF.

4 consecutive transmembrane segments (helical) span residues 7–27, 59–79, 86–106, and 128–148; these read YFLW…AALF, FIAS…LLIA, GGWL…HFYC, and FNEI…VKPF. Histidine 15 lines the heme pocket. Lysine 92 is a binding site for heme.

Belongs to the HemJ family. As to quaternary structure, homodimer. Heme b is required as a cofactor.

The protein localises to the cell membrane. It catalyses the reaction protoporphyrinogen IX + 3 A = protoporphyrin IX + 3 AH2. It participates in porphyrin-containing compound metabolism; protoporphyrin-IX biosynthesis; protoporphyrin-IX from protoporphyrinogen-IX: step 1/1. Its function is as follows. Catalyzes the oxidation of protoporphyrinogen IX to protoporphyrin IX. Is involved in the biosynthesis of tetrapyrrole molecules like heme. Does not use oxygen or artificial electron acceptors such as menadione or benzoquinone. In Helicobacter pylori (strain J99 / ATCC 700824) (Campylobacter pylori J99), this protein is Protoporphyrinogen IX oxidase.